A 352-amino-acid chain; its full sequence is 7,8-didemethyl-8-hydroxy-5-deazariboflavin synthase (352 aa).

In terms of domain architecture, Radical SAM core spans 35-275 (ITFSKNAFIP…EDISIQVPPN (241 aa)). The [4Fe-4S] cluster site is built by Cys49, Cys53, and Cys56.

It belongs to the radical SAM superfamily. CofG family. In terms of assembly, consists of two subunits, CofG and CofH. It depends on [4Fe-4S] cluster as a cofactor.

It catalyses the reaction 5-amino-5-(4-hydroxybenzyl)-6-(D-ribitylimino)-5,6-dihydrouracil + S-adenosyl-L-methionine = 7,8-didemethyl-8-hydroxy-5-deazariboflavin + 5'-deoxyadenosine + L-methionine + NH4(+) + H(+). The protein operates within cofactor biosynthesis; coenzyme F0 biosynthesis. Catalyzes the radical-mediated synthesis of 7,8-didemethyl-8-hydroxy-5-deazariboflavin from 5-amino-5-(4-hydroxybenzyl)-6-(D-ribitylimino)-5,6-dihydrouracil. The sequence is that of 7,8-didemethyl-8-hydroxy-5-deazariboflavin synthase from Methanococcus maripaludis (strain C6 / ATCC BAA-1332).